A 350-amino-acid chain; its full sequence is Glycerol-1-phosphate dehydrogenase [NAD(P)+] (350 aa).

NAD(+)-binding positions include 94–98 (GKPID) and 116–119 (TVAS). Residue D121 coordinates substrate. S125 is an NAD(+) binding site. Residue D168 coordinates substrate. Zn(2+)-binding residues include D168 and H248. H252 provides a ligand contact to substrate. H264 contributes to the Zn(2+) binding site.

It belongs to the glycerol-1-phosphate dehydrogenase family. Requires Zn(2+) as cofactor.

It localises to the cytoplasm. The catalysed reaction is sn-glycerol 1-phosphate + NAD(+) = dihydroxyacetone phosphate + NADH + H(+). It catalyses the reaction sn-glycerol 1-phosphate + NADP(+) = dihydroxyacetone phosphate + NADPH + H(+). It functions in the pathway membrane lipid metabolism; glycerophospholipid metabolism. Functionally, catalyzes the NAD(P)H-dependent reduction of dihydroxyacetonephosphate (DHAP or glycerone phosphate) to glycerol 1-phosphate (G1P). The G1P thus generated is used as the glycerophosphate backbone of phospholipids in the cellular membranes of Archaea. This is Glycerol-1-phosphate dehydrogenase [NAD(P)+] from Halorubrum lacusprofundi (strain ATCC 49239 / DSM 5036 / JCM 8891 / ACAM 34).